A 221-amino-acid polypeptide reads, in one-letter code: Lipoprotein-releasing system ATP-binding protein LolD (221 aa).

The ABC transporter domain occupies 6-220 (LILKNISKHY…YKLKHGLLNI (215 aa)). An ATP-binding site is contributed by 42–49 (GSSGSGKS).

This sequence belongs to the ABC transporter superfamily. Lipoprotein translocase (TC 3.A.1.125) family. The complex is composed of two ATP-binding proteins (LolD) and two transmembrane proteins (LolC and LolE).

The protein resides in the cell inner membrane. Functionally, part of the ABC transporter complex LolCDE involved in the translocation of mature outer membrane-directed lipoproteins, from the inner membrane to the periplasmic chaperone, LolA. Responsible for the formation of the LolA-lipoprotein complex in an ATP-dependent manner. The polypeptide is Lipoprotein-releasing system ATP-binding protein LolD (Rickettsia felis (strain ATCC VR-1525 / URRWXCal2) (Rickettsia azadi)).